The chain runs to 215 residues: Cytidylate kinase (215 aa).

10 to 18 (GPAAAGKST) lines the ATP pocket.

This sequence belongs to the cytidylate kinase family. Type 1 subfamily.

It localises to the cytoplasm. It catalyses the reaction CMP + ATP = CDP + ADP. It carries out the reaction dCMP + ATP = dCDP + ADP. The chain is Cytidylate kinase from Staphylococcus epidermidis (strain ATCC 35984 / DSM 28319 / BCRC 17069 / CCUG 31568 / BM 3577 / RP62A).